A 70-amino-acid polypeptide reads, in one-letter code: Cold shock-like protein CspA (70 aa).

The CSD domain maps to 7–67 (GKVKWYNSTK…KQGKAYAVNL (61 aa)).

The protein resides in the cytoplasm. The sequence is that of Cold shock-like protein CspA (cspA) from Rickettsia felis (strain ATCC VR-1525 / URRWXCal2) (Rickettsia azadi).